The following is a 152-amino-acid chain: Dynein light chain Tctex-type protein 2B (152 aa).

The protein belongs to the dynein light chain Tctex-type family. Light chain of the cytoplasmic dynein complex 2, a multisubunit complex composed at least of eleven different proteins. The cytoplasmic dynein 2 complex consists of two catalytic heavy chains (HCs) and a number of non-catalytic subunits presented by intermediate chains (ICs), light intermediate chains (LICs) and light chains (LCs). Among them, a heavy chain (DYNC2H1), two intermediate chains (DYNC2I2 and DYNC2I1), a light intermediate chain (DYNC2LI1), and a light chain (DYNLT2B) are unique to the dynein-2 complex, but a subset of the light chains are also shared by dynein-1 and dynein-2 complexes. The dimer DYNLT2B-DYNLT1/DYNLT3 interacts with DYNC2I1; this interaction is crucial for retrograde trafficking of ciliary proteins.

It localises to the dynein axonemal particle. Functionally, acts as one of several non-catalytic accessory components of the cytoplasmic dynein 2 complex (dynein-2 complex), a motor protein complex that drives the movement of cargos along microtubules within cilia and flagella in concert with the intraflagellar transport (IFT) system. Required for proper retrograde ciliary transport. In Bos taurus (Bovine), this protein is Dynein light chain Tctex-type protein 2B (DYNLT2B).